A 127-amino-acid chain; its full sequence is Calcitonin gene-related peptide 2 (127 aa).

An N-terminal signal peptide occupies residues 1–25 (MGFRKFSPFLALSILVLYQAGSLQA). Positions 26 to 79 (APFRSALESSPDPATLSKEDARLLLAALVQDYVQMKASELKQEQETQGSSSAAQ) are excised as a propeptide. Residues Cys-83 and Cys-88 are joined by a disulfide bond. Phe-118 is subject to Phenylalanine amide. Residues 124–127 (DLQA) constitute a propeptide that is removed on maturation.

Belongs to the calcitonin family. Expressed in spinal cord, pituitary and thalamus.

It localises to the secreted. In terms of biological role, CALCB/CGRP2 is a peptide hormone that induces vasodilation mediated by the CALCRL-RAMP1 receptor complex. Dilates a variety of vessels including the coronary, cerebral and systemic vasculature. Its abundance in the CNS also points toward a neurotransmitter or neuromodulator role. The chain is Calcitonin gene-related peptide 2 from Homo sapiens (Human).